The sequence spans 466 residues: Uronate isomerase (466 aa).

Belongs to the metallo-dependent hydrolases superfamily. Uronate isomerase family.

It catalyses the reaction D-glucuronate = D-fructuronate. It carries out the reaction aldehydo-D-galacturonate = keto-D-tagaturonate. The protein operates within carbohydrate metabolism; pentose and glucuronate interconversion. This is Uronate isomerase from Streptococcus agalactiae serotype III (strain NEM316).